A 189-amino-acid polypeptide reads, in one-letter code: MRVLGVDPGLTRCGFGVVDGGGGRTVTPIAVDVVRTPADLELSSRLLRISEAAESWIDLHRPEVVAIERVFSQHNVRTAMGTAQAGGVVALAAARRGIPVCFHTPSEVKAAVTGSGSADKAQVTAMVTRILKLAAAPKPADAADALALAICHCWRAPMIERMARAEAAAAEQKRRYQARLAEVKKAGTR.

Catalysis depends on residues Asp-7, Glu-68, and Asp-141. The Mg(2+) site is built by Asp-7, Glu-68, and Asp-141.

This sequence belongs to the RuvC family. Homodimer which binds Holliday junction (HJ) DNA. The HJ becomes 2-fold symmetrical on binding to RuvC with unstacked arms; it has a different conformation from HJ DNA in complex with RuvA. In the full resolvosome a probable DNA-RuvA(4)-RuvB(12)-RuvC(2) complex forms which resolves the HJ. Mg(2+) is required as a cofactor.

It is found in the cytoplasm. The enzyme catalyses Endonucleolytic cleavage at a junction such as a reciprocal single-stranded crossover between two homologous DNA duplexes (Holliday junction).. Functionally, the RuvA-RuvB-RuvC complex processes Holliday junction (HJ) DNA during genetic recombination and DNA repair. Endonuclease that resolves HJ intermediates. Cleaves cruciform DNA by making single-stranded nicks across the HJ at symmetrical positions within the homologous arms, yielding a 5'-phosphate and a 3'-hydroxyl group; requires a central core of homology in the junction. The consensus cleavage sequence is 5'-(A/T)TT(C/G)-3'. Cleavage occurs on the 3'-side of the TT dinucleotide at the point of strand exchange. HJ branch migration catalyzed by RuvA-RuvB allows RuvC to scan DNA until it finds its consensus sequence, where it cleaves and resolves the cruciform DNA. The polypeptide is Crossover junction endodeoxyribonuclease RuvC (Rhodococcus jostii (strain RHA1)).